Reading from the N-terminus, the 209-residue chain is Large ribosomal subunit protein bL25 (209 aa).

Belongs to the bacterial ribosomal protein bL25 family. CTC subfamily. As to quaternary structure, part of the 50S ribosomal subunit; part of the 5S rRNA/L5/L18/L25 subcomplex. Contacts the 5S rRNA. Binds to the 5S rRNA independently of L5 and L18.

In terms of biological role, this is one of the proteins that binds to the 5S RNA in the ribosome where it forms part of the central protuberance. This chain is Large ribosomal subunit protein bL25, found in Xanthomonas campestris pv. campestris (strain B100).